A 640-amino-acid polypeptide reads, in one-letter code: Chaperone protein DnaK (640 aa).

Residue Thr-201 is modified to Phosphothreonine; by autocatalysis. A compositionally biased stretch (low complexity) spans 603–621 (AASADQGGAPGADAGNAGK). A disordered region spans residues 603–625 (AASADQGGAPGADAGNAGKAQDD).

Belongs to the heat shock protein 70 family.

Functionally, acts as a chaperone. In Stenotrophomonas maltophilia (strain K279a), this protein is Chaperone protein DnaK.